Reading from the N-terminus, the 341-residue chain is L-threonine 3-dehydrogenase (341 aa).

Cys38 is a binding site for Zn(2+). Residues Thr40 and His43 each act as charge relay system in the active site. Zn(2+) is bound by residues His63, Glu64, Cys93, Cys96, Cys99, and Cys107. Residues Ile175, Asp195, Arg200, 262–264, and 286–287 contribute to the NAD(+) site; these read LGI and IY.

This sequence belongs to the zinc-containing alcohol dehydrogenase family. Homotetramer. Zn(2+) serves as cofactor.

The protein localises to the cytoplasm. It carries out the reaction L-threonine + NAD(+) = (2S)-2-amino-3-oxobutanoate + NADH + H(+). The protein operates within amino-acid degradation; L-threonine degradation via oxydo-reductase pathway; glycine from L-threonine: step 1/2. Catalyzes the NAD(+)-dependent oxidation of L-threonine to 2-amino-3-ketobutyrate. The chain is L-threonine 3-dehydrogenase from Yersinia enterocolitica serotype O:8 / biotype 1B (strain NCTC 13174 / 8081).